We begin with the raw amino-acid sequence, 735 residues long: Coiled-coil quantitatively-enriched protein 1 (735 aa).

A coiled-coil region spans residues 514–719 (AAVQYLQRRL…TLKILEQKSL (206 aa)).

Interacts (during meiosis) with pcp1. Interacts with clr3, pot1, taz1 and tpz1.

Its subcellular location is the nucleus. It is found in the nucleoplasm. The protein localises to the chromosome. It localises to the telomere. In terms of biological role, component of the meiotic bouquet that facilitates meiotic nuclear reorganization of the telomeres to the centrosome. Links telomeres to the meiotic centrosome component pcp1. Essential for the formation of normal telomere clusters during meiotic prophase. Required for telomere length regulation and chromosome segregation. Required for proper positioning of nucleosomes at heterochromatic loci and for transcriptional gene silencing (TGS) function of the Snf2/Hdac-containing repressor complex (SHREC). In Schizosaccharomyces pombe (strain 972 / ATCC 24843) (Fission yeast), this protein is Coiled-coil quantitatively-enriched protein 1 (ccq1).